A 299-amino-acid chain; its full sequence is MAELGLNEHHQNEVINYMRFARSKRGLRLKTVDSCFQDLKESRLVEETFTIDEVSEVLNGLQAVVHSEVESELINTAYTNVLLLRQLFAQAEKWYLKLQTDISELENRELLEQVAEFEKAEITSSNKKPILDVTKPKLAPLNEGGTAELLNKEILRLQEENEKLKSRLKTVEIQATNALDEKSKLEKALQDLQLDQGNQKDFIKAQDLSNLENTVAALKSEFQKTLNDKTENQKSLEENLATAKHDLLRVQEQLHMAEKELEKKFQQTAAYRNMKEILTKKNDQIKDLRKRLAQYEPED.

The stretch at 96–296 forms a coiled coil; sequence LKLQTDISEL…DLRKRLAQYE (201 aa). Residues 145–299 are interaction with BSS9; it reads GTAELLNKEI…KRLAQYEPED (155 aa).

The protein belongs to the LZTFL1 family. In terms of assembly, self-associates. Interacts with BBS9; the interaction mediates the association of LZTL1 with the BBsome complex and regulates BBSome ciliary trafficking.

Its subcellular location is the cytoplasm. In terms of biological role, regulates ciliary localization of the BBSome complex. Together with the BBSome complex, controls SMO ciliary trafficking and contributes to the sonic hedgehog (SHH) pathway regulation. May play a role in neurite outgrowth. May have tumor suppressor function. This is Leucine zipper transcription factor-like protein 1 (LZTFL1) from Pongo abelii (Sumatran orangutan).